We begin with the raw amino-acid sequence, 308 residues long: MLFKNRHVISMKDFSREEIDHVLDTAEKLEPVARGEERSRLLDGKIVSLLFFEPSTRTRLSFEAATQRLGGQALNLGSVEASSVMKGENLADTIRVISKYADLIVLRHPLDGSARMAAEFASVPVINGGDGSVHHPTQTFLDLYTIRRESHLEDLRIAMAGDLKYGRTVHSLCHALSLYGAEMTFVSPPELRMPPEIVRDLKKQKIRVKETDSLEEIIGDVEVLYMTRVQRERFPDPEEYEKVKNRLKVTGDLLKAADPELKVLHPLPRVNEIAPEVDATPHACYFEQAFYGVPIRMALLALAMGVIE.

Carbamoyl phosphate contacts are provided by Arg-57 and Thr-58. Lys-86 serves as a coordination point for L-aspartate. Positions 107, 135, and 138 each coordinate carbamoyl phosphate. Arg-167 and Arg-228 together coordinate L-aspartate. 2 residues coordinate carbamoyl phosphate: Leu-267 and Pro-268.

This sequence belongs to the aspartate/ornithine carbamoyltransferase superfamily. ATCase family. As to quaternary structure, heterooligomer of catalytic and regulatory chains.

It carries out the reaction carbamoyl phosphate + L-aspartate = N-carbamoyl-L-aspartate + phosphate + H(+). Its pathway is pyrimidine metabolism; UMP biosynthesis via de novo pathway; (S)-dihydroorotate from bicarbonate: step 2/3. Catalyzes the condensation of carbamoyl phosphate and aspartate to form carbamoyl aspartate and inorganic phosphate, the committed step in the de novo pyrimidine nucleotide biosynthesis pathway. This is Aspartate carbamoyltransferase catalytic subunit from Methanosarcina acetivorans (strain ATCC 35395 / DSM 2834 / JCM 12185 / C2A).